The following is a 286-amino-acid chain: NAD kinase (286 aa).

The active-site Proton acceptor is the aspartate 74. NAD(+)-binding positions include 74 to 75 (DG), 148 to 149 (ND), aspartate 178, alanine 186, 189 to 194 (TAYNLS), and glutamine 244.

The protein belongs to the NAD kinase family. It depends on a divalent metal cation as a cofactor.

It is found in the cytoplasm. The enzyme catalyses NAD(+) + ATP = ADP + NADP(+) + H(+). Functionally, involved in the regulation of the intracellular balance of NAD and NADP, and is a key enzyme in the biosynthesis of NADP. Catalyzes specifically the phosphorylation on 2'-hydroxyl of the adenosine moiety of NAD to yield NADP. This Campylobacter jejuni subsp. jejuni serotype O:23/36 (strain 81-176) protein is NAD kinase.